The primary structure comprises 210 residues: Na(+)-translocating NADH-quinone reductase subunit D (210 aa).

6 consecutive transmembrane segments (helical) span residues 9–29, 42–62, 72–92, 103–123, 131–151, and 178–198; these read SVLI…LGVC, LVMT…ISLI, IIVQ…VLQA, VFVG…AFAM, FMDG…VGFV, and NGLL…IWII.

The protein belongs to the NqrDE/RnfAE family. Composed of six subunits; NqrA, NqrB, NqrC, NqrD, NqrE and NqrF.

Its subcellular location is the cell inner membrane. The catalysed reaction is a ubiquinone + n Na(+)(in) + NADH + H(+) = a ubiquinol + n Na(+)(out) + NAD(+). In terms of biological role, NQR complex catalyzes the reduction of ubiquinone-1 to ubiquinol by two successive reactions, coupled with the transport of Na(+) ions from the cytoplasm to the periplasm. NqrA to NqrE are probably involved in the second step, the conversion of ubisemiquinone to ubiquinol. In Shewanella piezotolerans (strain WP3 / JCM 13877), this protein is Na(+)-translocating NADH-quinone reductase subunit D.